Consider the following 594-residue polypeptide: Class I diterpene synthase TPS6, chloroplastic (594 aa).

Positions 330, 334, 474, 477, and 482 each coordinate Mg(2+). The short motif at 330-334 is the DDXXD motif element; the sequence is DDFFD.

It belongs to the terpene synthase family. Mg(2+) serves as cofactor. Mostly expressed in trichomes of leaves and fruits.

It localises to the plastid. Its subcellular location is the chloroplast. It catalyses the reaction peregrinol diphosphate = labd-13(16),14-diene-9-ol + diphosphate. It carries out the reaction 9alpha-copalyl diphosphate = syn-isopimara-7,15-diene + diphosphate. The protein operates within secondary metabolite biosynthesis; terpenoid biosynthesis. Functionally, involved in the biosynthesis of labdane-type diterpenoid including cleroda-dienols, and peregrinol lactones and furan derivatives, dopaminergic diterpenoids that can bind to dopamine receptors in the human pituitary gland, have probably ability to lower prolactin levels, and are used to treat menstrual cycle disorders (e.g. premenstrual syndrome and mastodynia). Terpene synthase the catalyzes the conversion of peregrinol diphosphate to labda-13(16),14-dien-9-ol, and of syn-copalyl diphosophate to dehydroabietadiene and syn-isopimara-7,15-diene. The polypeptide is Class I diterpene synthase TPS6, chloroplastic (Vitex agnus-castus (Chaste tree)).